Consider the following 301-residue polypeptide: MEKGFDKSAIQMVIITGLSGAGKSQAIRALEDLGFFCVDNLPPNLLPKFGELIVHSKGKINKIALVIDIRGGEFFDSLSDGLHQLGAQGIRCEILFLEASDEVLIRRYKESRRRHPLSGDARIFDSIQLERQMLADLRGRADKVIDTSDLSARQLKNQVFELFGKDARHSQLRITIVSFGYKYGTPRDADLLMDVRFLPNPFYEPALRNLTGNDEPVQEYVLSSPTTKVFMRKYYSLLRFLLPHYTKEGKSHLVVGIGCTGGKHRSVTLANRLAAALVDEDYAITVKHRDIDKDRGGGESA.

Residue 17 to 24 coordinates ATP; that stretch reads GLSGAGKS. 68 to 71 contacts GTP; the sequence is DIRG.

The protein belongs to the RapZ-like family.

Displays ATPase and GTPase activities. The chain is Nucleotide-binding protein Helmi_06460 from Heliobacterium modesticaldum (strain ATCC 51547 / Ice1).